The primary structure comprises 35 residues: Mu-theraphotoxin-Hhn1a (35 aa).

Intrachain disulfides connect Cys2–Cys17, Cys9–Cys24, and Cys16–Cys31.

It belongs to the neurotoxin 10 (Hwtx-1) family. 22 (Htx-4) subfamily. Monomer. As to expression, expressed by the venom gland.

It is found in the secreted. Its function is as follows. Inhibits selectively tetrodotoxin-sensitive voltage-gated sodium channels (Nav). Does not act by binding to receptor site 3 to slow the inactivation kinetics of sodium currents. This is Mu-theraphotoxin-Hhn1a from Cyriopagopus hainanus (Chinese bird spider).